We begin with the raw amino-acid sequence, 284 residues long: 4-diphosphocytidyl-2-C-methyl-D-erythritol kinase (284 aa).

K14 is a catalytic residue. Position 98 to 108 (98 to 108) interacts with ATP; it reads PMGGGLGGGSS. Residue D140 is part of the active site.

Belongs to the GHMP kinase family. IspE subfamily.

The catalysed reaction is 4-CDP-2-C-methyl-D-erythritol + ATP = 4-CDP-2-C-methyl-D-erythritol 2-phosphate + ADP + H(+). It participates in isoprenoid biosynthesis; isopentenyl diphosphate biosynthesis via DXP pathway; isopentenyl diphosphate from 1-deoxy-D-xylulose 5-phosphate: step 3/6. Its function is as follows. Catalyzes the phosphorylation of the position 2 hydroxy group of 4-diphosphocytidyl-2C-methyl-D-erythritol. In Shewanella sp. (strain MR-7), this protein is 4-diphosphocytidyl-2-C-methyl-D-erythritol kinase.